We begin with the raw amino-acid sequence, 272 residues long: MRNRQNQKNWTNLRGLLSVEEREKLENLRLELVCMQAANSIPHDPPEISSLETELICLTTNTKDCKPVRFHSDLLLKKHKYNEIKKIFKEILENIEAYRDEFTKNQTKINLLLADDARASLRNRSLDFSDLMPSSIIKDVQVLANMEANVVVMKNALKTKLVGEKSVPVASSPISSIIPRTSRNKKTSPSNYHHSVLSHRKSNEWNQVSSTEYKRTLLLNIKYNDDFKATIVPSFESCLCSRSYFLRVKLHFDKGVGSAEIDIPVQVKNSFI.

This is an uncharacterized protein from Saccharomyces cerevisiae (strain ATCC 204508 / S288c) (Baker's yeast).